The sequence spans 503 residues: TGF-beta receptor type-1 (503 aa).

The signal sequence occupies residues 1-33; it reads MEAAVAAPRPRLLLLVLAAAAAAAAALLPGATA. Topologically, residues 34–126 are extracellular; sequence LQCFCHLCTK…SSPGLGPVEL (93 aa). Intrachain disulfides connect Cys-36-Cys-54, Cys-38-Cys-41, Cys-48-Cys-71, Cys-86-Cys-100, and Cys-101-Cys-106. Residue Asn-45 is glycosylated (N-linked (GlcNAc...) asparagine). The helical transmembrane segment at 127–147 threads the bilayer; that stretch reads AAVIAGPVCFVCISLMLMVYI. The Cytoplasmic portion of the chain corresponds to 148–503; sequence CHNRTVIHHR…QLSQQEGIKM (356 aa). Position 165 is a phosphoserine (Ser-165). The GS domain maps to 175–204; the sequence is TTLKDLIYDMTTSGSGSGLPLLVQRTIART. Thr-185 and Thr-186 each carry phosphothreonine; by TGFBR2. 3 positions are modified to phosphoserine; by TGFBR2: Ser-187, Ser-189, and Ser-191. Positions 193–194 match the FKBP1A-binding motif; sequence LP. The region spanning 205-495 is the Protein kinase domain; sequence IVLQESIGKG…LRIKKTLSQL (291 aa). Residues 211–219 and Lys-232 each bind ATP; that span reads IGKGRFGEV. Lys-268 participates in a covalent cross-link: Glycyl lysine isopeptide (Lys-Gly) (interchain with G-Cter in ubiquitin). Residue Asp-333 is the Proton acceptor of the active site. Lys-391 is covalently cross-linked (Glycyl lysine isopeptide (Lys-Gly) (interchain with G-Cter in SUMO)).

Belongs to the protein kinase superfamily. TKL Ser/Thr protein kinase family. TGFB receptor subfamily. As to quaternary structure, homodimer; in the endoplasmic reticulum but also at the cell membrane. Heterohexamer; TGFB1, TGFB2 and TGFB3 homodimeric ligands assemble a functional receptor composed of two TGFBR1 and TGFBR2 heterodimers to form a ligand-receptor heterohexamer. The respective affinity of TGBRB1 and TGFBR2 for the ligands may modulate the kinetics of assembly of the receptor and may explain the different biological activities of TGFB1, TGFB2 and TGFB3. Component of a complex composed of TSC22D1 (via N-terminus), TGFBR1 and TGFBR2; the interaction between TSC22D1 and TGFBR1 is inhibited by SMAD7 and promoted by TGFB1. Interacts with CD109; inhibits TGF-beta receptor activation in keratinocytes. Interacts with RBPMS. Interacts (unphosphorylated) with FKBP1A; prevents TGFBR1 phosphorylation by TGFBR2 and stabilizes it in the inactive conformation. Interacts with SMAD2, SMAD3 and ZFYVE9; ZFYVE9 recruits SMAD2 and SMAD3 to the TGF-beta receptor. Interacts with TRAF6 and MAP3K7; induces MAP3K7 activation by TRAF6. Interacts with PARD6A; involved in TGF-beta induced epithelial to mesenchymal transition. Interacts with NEDD4L. Interacts with SMAD7, SMURF1 and SMURF2; SMAD7 recruits NEDD4L, SMURF1 and SMURF2 to the TGF-beta receptor. Interacts with USP15 and VPS39. Interacts with SDCBP (via C-terminus). Interacts with CAV1 and this interaction is impaired in the presence of SDCBP. Interacts with APPL1; interaction is TGF beta dependent; mediates trafficking of the TGFBR1 from the endosomes to the nucleus via microtubules in a TRAF6-dependent manner. Interacts with GPR50; this interaction promotes the constitutive activation of SMAD signaling pathway. Mg(2+) is required as a cofactor. The cofactor is Mn(2+). Post-translationally, phosphorylated at basal levels in the absence of ligand. Activated upon phosphorylation by TGFBR2, mainly in the GS domain. Phosphorylation in the GS domain abrogates FKBP1A-binding. In terms of processing, N-Glycosylated. Ubiquitinated; undergoes ubiquitination catalyzed by several E3 ubiquitin ligases including SMURF1, SMURF2 and NEDD4L2. Results in the proteasomal and/or lysosomal degradation of the receptor thereby negatively regulating its activity. Deubiquitinated by USP15, leading to stabilization of the protein and enhanced TGF-beta signal. Its ubiquitination and proteasome-mediated degradation is negatively regulated by SDCBP. Ubiquitinated by BFAR via'Lys-63'-linked ubiquitination at Lys-268, leading to TGF-beta signaling activation. In terms of tissue distribution, found in all tissues examined, most abundant in placenta and least abundant in brain and heart. Expressed in a variety of cancer cell lines.

Its subcellular location is the cell membrane. The protein resides in the cell junction. The protein localises to the tight junction. It localises to the cell surface. It is found in the membrane raft. It carries out the reaction L-threonyl-[receptor-protein] + ATP = O-phospho-L-threonyl-[receptor-protein] + ADP + H(+). The enzyme catalyses L-seryl-[receptor-protein] + ATP = O-phospho-L-seryl-[receptor-protein] + ADP + H(+). With respect to regulation, kept in an inactive conformation by FKBP1A preventing receptor activation in absence of ligand. CD109 is another inhibitor of the receptor. Functionally, transmembrane serine/threonine kinase forming with the TGF-beta type II serine/threonine kinase receptor, TGFBR2, the non-promiscuous receptor for the TGF-beta cytokines TGFB1, TGFB2 and TGFB3. Transduces the TGFB1, TGFB2 and TGFB3 signal from the cell surface to the cytoplasm and is thus regulating a plethora of physiological and pathological processes including cell cycle arrest in epithelial and hematopoietic cells, control of mesenchymal cell proliferation and differentiation, wound healing, extracellular matrix production, immunosuppression and carcinogenesis. The formation of the receptor complex composed of 2 TGFBR1 and 2 TGFBR2 molecules symmetrically bound to the cytokine dimer results in the phosphorylation and the activation of TGFBR1 by the constitutively active TGFBR2. Activated TGFBR1 phosphorylates SMAD2 which dissociates from the receptor and interacts with SMAD4. The SMAD2-SMAD4 complex is subsequently translocated to the nucleus where it modulates the transcription of the TGF-beta-regulated genes. This constitutes the canonical SMAD-dependent TGF-beta signaling cascade. Also involved in non-canonical, SMAD-independent TGF-beta signaling pathways. For instance, TGFBR1 induces TRAF6 autoubiquitination which in turn results in MAP3K7 ubiquitination and activation to trigger apoptosis. Also regulates epithelial to mesenchymal transition through a SMAD-independent signaling pathway through PARD6A phosphorylation and activation. In Homo sapiens (Human), this protein is TGF-beta receptor type-1 (TGFBR1).